The sequence spans 427 residues: Dihydroorotase (427 aa).

Residues histidine 60 and histidine 62 each coordinate Zn(2+). Residues 62–64 and asparagine 94 contribute to the substrate site; that span reads HLR. Zn(2+)-binding residues include aspartate 151, histidine 178, and histidine 231. Asparagine 277 contacts substrate. Aspartate 304 contacts Zn(2+). Residue aspartate 304 is part of the active site. Substrate contacts are provided by residues histidine 308 and 322-323; that span reads FG.

It belongs to the metallo-dependent hydrolases superfamily. DHOase family. Class I DHOase subfamily. Zn(2+) is required as a cofactor.

The enzyme catalyses (S)-dihydroorotate + H2O = N-carbamoyl-L-aspartate + H(+). The protein operates within pyrimidine metabolism; UMP biosynthesis via de novo pathway; (S)-dihydroorotate from bicarbonate: step 3/3. Catalyzes the reversible cyclization of carbamoyl aspartate to dihydroorotate. This is Dihydroorotase from Pelotomaculum thermopropionicum (strain DSM 13744 / JCM 10971 / SI).